A 325-amino-acid chain; its full sequence is Phospho-N-acetylmuramoyl-pentapeptide-transferase (325 aa).

10 helical membrane passes run 9–29, 53–73, 77–97, 112–132, 154–174, 182–202, 204–224, 231–251, 257–277, and 305–325; these read ALLV…PWLL, TMGG…FQAF, TLLL…DDYL, KLLG…AFLG, LGNV…ANAV, GLCS…SLAL, EKGL…FLVY, VFMG…FAVL, FLLL…IQVI, and KIVL…GYGL.

It belongs to the glycosyltransferase 4 family. MraY subfamily. Requires Mg(2+) as cofactor.

Its subcellular location is the cell membrane. The catalysed reaction is UDP-N-acetyl-alpha-D-muramoyl-L-alanyl-gamma-D-glutamyl-meso-2,6-diaminopimeloyl-D-alanyl-D-alanine + di-trans,octa-cis-undecaprenyl phosphate = di-trans,octa-cis-undecaprenyl diphospho-N-acetyl-alpha-D-muramoyl-L-alanyl-D-glutamyl-meso-2,6-diaminopimeloyl-D-alanyl-D-alanine + UMP. It functions in the pathway cell wall biogenesis; peptidoglycan biosynthesis. Its function is as follows. Catalyzes the initial step of the lipid cycle reactions in the biosynthesis of the cell wall peptidoglycan: transfers peptidoglycan precursor phospho-MurNAc-pentapeptide from UDP-MurNAc-pentapeptide onto the lipid carrier undecaprenyl phosphate, yielding undecaprenyl-pyrophosphoryl-MurNAc-pentapeptide, known as lipid I. The chain is Phospho-N-acetylmuramoyl-pentapeptide-transferase from Carboxydothermus hydrogenoformans (strain ATCC BAA-161 / DSM 6008 / Z-2901).